The following is a 223-amino-acid chain: Small ribosomal subunit protein uS3 (223 aa).

A KH type-2 domain is found at 39 to 117 (IREHLRKKPS…RPELNAKLVA (79 aa)).

The protein belongs to the universal ribosomal protein uS3 family. Part of the 30S ribosomal subunit. Forms a tight complex with proteins S10 and S14.

Functionally, binds the lower part of the 30S subunit head. Binds mRNA in the 70S ribosome, positioning it for translation. The polypeptide is Small ribosomal subunit protein uS3 (Chlamydia felis (strain Fe/C-56) (Chlamydophila felis)).